Here is a 668-residue protein sequence, read N- to C-terminus: CLK4-associating serine/arginine rich protein (668 aa).

Ser-101 is subject to Phosphoserine. 2 disordered regions span residues 173-232 (AEVE…GMAD) and 252-668 (AKAL…HYRH). The segment covering 182-214 (PEEEESPAEEESNSDEDEVIPDIDVEVDVDELN) has biased composition (acidic residues). Residues 265 to 283 (RRSRRQRREFREKRLRGRK) are compositionally biased toward basic residues. Phosphoserine is present on residues Ser-285 and Ser-294. Residues 290–313 (ARRDSPTYDPYKRSPSESSSESRS) show a composition bias toward basic and acidic residues. The residue at position 327 (Thr-327) is a Phosphothreonine. A phosphoserine mark is found at Ser-331 and Ser-335. Low complexity-rich tracts occupy residues 340 to 353 (AAAA…GAAP) and 378 to 395 (SSSS…SRSS). A compositionally biased stretch (basic residues) spans 396-435 (SRSRRGYYRSGRHARSRSRSWSRSRSRSRRYSRSRSRGRR). The segment covering 436–446 (HSDGGSRDGHR) has biased composition (basic and acidic residues). Residues 475–486 (RGARGPRHHSSS) are compositionally biased toward basic residues. Low complexity-rich tracts occupy residues 487 to 510 (HSRS…SRSQ) and 518 to 527 (QSHSQSQSHS). A Phosphoserine modification is found at Ser-541. Residue Thr-567 is modified to Phosphothreonine. Residues 579 to 641 (ALNRQFKADK…ERQYSRQSRS (63 aa)) adopt a coiled-coil conformation. Composition is skewed to basic and acidic residues over residues 584–611 (FKAD…ELRA) and 619–635 (KERE…ERQY). Positions 636–645 (SRQSRSPSPR) are enriched in low complexity. Residues 653 to 668 (SRRRSRSRSRSPHYRH) are compositionally biased toward basic residues.

Belongs to the splicing factor SR family. As to quaternary structure, probably interacts with CLK4. Post-translationally, phosphorylated in vitro by CLK4. As to expression, highly expressed in brain. Expressed at intermediate level in lung and liver. In brain, it is expressed in the hippocampus, cerebellum and olfactory bulb.

The protein resides in the nucleus. It is found in the nucleoplasm. Functionally, probably functions as an alternative splicing regulator. May regulate the mRNA splicing of genes such as CLK1. May act by regulating members of the CLK kinase family. This Mus musculus (Mouse) protein is CLK4-associating serine/arginine rich protein (Clasrp).